Here is a 218-residue protein sequence, read N- to C-terminus: MATISAVQVEFLEFPAVVTSPASGKTYFLGGAGERGLTIEGKFIKFTGIGVYLEDKAVPSLAAKWKGKTSEELVHTLHFYRDIISGPFEKLIRGSKILPLAGAEYSKKVMENCVAHMKSVGTYGDAEAAAIEKFAEAFKNVNFAPGASVFYRQSPDGILGLSFSEDATIPEKEAAVIENKAVSAAVLETMIGEHAVSPDLKRSLASRLPAVLSHGIIV.

Thr-47, Asn-112, and Thr-189 together coordinate substrate.

Belongs to the chalcone isomerase family. Expressed in roots, shoots, flowers and seeds.

The enzyme catalyses a chalcone = a flavanone.. The protein operates within secondary metabolite biosynthesis; flavonoid biosynthesis. Catalyzes the intramolecular cyclization of bicyclic chalcones into tricyclic (S)-flavanones. Responsible for the isomerization of 4,2',4',6'-tetrahydroxychalcone (also termed chalcone) into naringenin. The chain is Chalcone--flavanone isomerase 1A (CHI1A) from Glycine max (Soybean).